The following is a 437-amino-acid chain: Protein arginine methyltransferase NDUFAF7 homolog, mitochondrial (437 aa).

Residues 21 to 49 are disordered; sequence RPNLGATGTPKMEPPKEQPEASSKAESGH.

This sequence belongs to the NDUFAF7 family.

The protein resides in the mitochondrion. The catalysed reaction is L-arginyl-[protein] + 2 S-adenosyl-L-methionine = N(omega),N(omega)'-dimethyl-L-arginyl-[protein] + 2 S-adenosyl-L-homocysteine + 2 H(+). In terms of biological role, arginine methyltransferase involved in the assembly or stability of mitochondrial NADH:ubiquinone oxidoreductase complex (complex I). In Drosophila melanogaster (Fruit fly), this protein is Protein arginine methyltransferase NDUFAF7 homolog, mitochondrial.